Reading from the N-terminus, the 159-residue chain is 3-hydroxyacyl-[acyl-carrier-protein] dehydratase FabZ (159 aa).

H58 is a catalytic residue.

Belongs to the thioester dehydratase family. FabZ subfamily.

Its subcellular location is the cytoplasm. The enzyme catalyses a (3R)-hydroxyacyl-[ACP] = a (2E)-enoyl-[ACP] + H2O. In terms of biological role, involved in unsaturated fatty acids biosynthesis. Catalyzes the dehydration of short chain beta-hydroxyacyl-ACPs and long chain saturated and unsaturated beta-hydroxyacyl-ACPs. The sequence is that of 3-hydroxyacyl-[acyl-carrier-protein] dehydratase FabZ from Helicobacter pylori (strain G27).